The primary structure comprises 415 residues: Squalene synthase 2 (415 aa).

A run of 2 helical transmembrane segments spans residues 281–301 (AIFR…ALCY) and 392–412 (LIVI…SNLP).

This sequence belongs to the phytoene/squalene synthase family. Requires Mg(2+) as cofactor. The cofactor is Mn(2+).

The protein localises to the endoplasmic reticulum membrane. It carries out the reaction 2 (2E,6E)-farnesyl diphosphate + NADH + H(+) = squalene + 2 diphosphate + NAD(+). The enzyme catalyses 2 (2E,6E)-farnesyl diphosphate + NADPH + H(+) = squalene + 2 diphosphate + NADP(+). Its pathway is terpene metabolism; lanosterol biosynthesis; lanosterol from farnesyl diphosphate: step 1/3. In terms of biological role, component of the triterpene saponins (e.g. ginsenosides or panaxosides) and phytosterols biosynthetic pathways. Catalyzes the biosynthesis of squalene. The chain is Squalene synthase 2 from Panax ginseng (Korean ginseng).